The primary structure comprises 657 residues: Methionine--tRNA ligase (657 aa).

The 'HIGH' region signature appears at 13-23 (YYPSGNLHIGH). A 'KMSKS' region motif is present at residues 308 to 312 (KMSKS). Lys311 lines the ATP pocket. In terms of domain architecture, tRNA-binding spans 557-657 (DFDKVEIKAA…SAIPNGAVIK (101 aa)).

Belongs to the class-I aminoacyl-tRNA synthetase family. MetG type 2B subfamily. In terms of assembly, homodimer.

The protein localises to the cytoplasm. It carries out the reaction tRNA(Met) + L-methionine + ATP = L-methionyl-tRNA(Met) + AMP + diphosphate. In terms of biological role, is required not only for elongation of protein synthesis but also for the initiation of all mRNA translation through initiator tRNA(fMet) aminoacylation. The protein is Methionine--tRNA ligase of Staphylococcus aureus (strain MRSA252).